The chain runs to 428 residues: Putative heme-binding peroxidase (428 aa).

The segment at 1 to 33 (MTAIQKPVVAKREAPKAEVNPTVSRSTQTETIK) is disordered. A compositionally biased stretch (polar residues) spans 21 to 32 (PTVSRSTQTETI). The active-site Proton acceptor is histidine 188. Histidine 312 contacts heme b. Catalysis depends on tryptophan 328, which acts as the Tryptophan radical intermediate.

It belongs to the peroxidase family. Cytochrome c peroxidase subfamily. Heme b is required as a cofactor.

Destroys radicals which are normally produced within the cells and which are toxic to biological systems. This Debaryomyces hansenii (strain ATCC 36239 / CBS 767 / BCRC 21394 / JCM 1990 / NBRC 0083 / IGC 2968) (Yeast) protein is Putative heme-binding peroxidase.